The following is a 340-amino-acid chain: Phenylalanine--tRNA ligase alpha subunit (340 aa).

Residue Glu254 coordinates Mg(2+).

Belongs to the class-II aminoacyl-tRNA synthetase family. Phe-tRNA synthetase alpha subunit type 1 subfamily. Tetramer of two alpha and two beta subunits. Mg(2+) is required as a cofactor.

Its subcellular location is the cytoplasm. The enzyme catalyses tRNA(Phe) + L-phenylalanine + ATP = L-phenylalanyl-tRNA(Phe) + AMP + diphosphate + H(+). The chain is Phenylalanine--tRNA ligase alpha subunit from Acidithiobacillus ferrooxidans (strain ATCC 23270 / DSM 14882 / CIP 104768 / NCIMB 8455) (Ferrobacillus ferrooxidans (strain ATCC 23270)).